The chain runs to 158 residues: Cyclic pyranopterin monophosphate synthase (158 aa).

Substrate-binding positions include 74–76 (MCH) and 112–113 (ME). Residue aspartate 127 is part of the active site.

It belongs to the MoaC family. In terms of assembly, homohexamer; trimer of dimers.

It catalyses the reaction (8S)-3',8-cyclo-7,8-dihydroguanosine 5'-triphosphate = cyclic pyranopterin phosphate + diphosphate. It functions in the pathway cofactor biosynthesis; molybdopterin biosynthesis. Its function is as follows. Catalyzes the conversion of (8S)-3',8-cyclo-7,8-dihydroguanosine 5'-triphosphate to cyclic pyranopterin monophosphate (cPMP). The chain is Cyclic pyranopterin monophosphate synthase from Thermoanaerobacter sp. (strain X514).